Consider the following 231-residue polypeptide: Glutathione-specific gamma-glutamylcyclotransferase (231 aa).

Residue 49–54 (IFGYGS) coordinates substrate. The active-site Proton acceptor is Glu127.

This sequence belongs to the gamma-glutamylcyclotransferase family. ChaC subfamily.

The catalysed reaction is glutathione = L-cysteinylglycine + 5-oxo-L-proline. Catalyzes the cleavage of glutathione into 5-oxo-L-proline and a Cys-Gly dipeptide. Acts specifically on glutathione, but not on other gamma-glutamyl peptides. In Escherichia coli (strain K12), this protein is Glutathione-specific gamma-glutamylcyclotransferase.